Here is a 780-residue protein sequence, read N- to C-terminus: LPS-assembly protein LptD (780 aa).

An N-terminal signal peptide occupies residues 1 to 24; that stretch reads MKKRFPTLLATLIWTALYSQHTLA.

It belongs to the LptD family. Component of the lipopolysaccharide transport and assembly complex. Interacts with LptE and LptA.

The protein resides in the cell outer membrane. Its function is as follows. Together with LptE, is involved in the assembly of lipopolysaccharide (LPS) at the surface of the outer membrane. The polypeptide is LPS-assembly protein LptD (Yersinia pseudotuberculosis serotype I (strain IP32953)).